Here is a 335-residue protein sequence, read N- to C-terminus: Cell division protein ZipA (335 aa).

Residues 1 to 4 are Periplasmic-facing; the sequence is MDLN. Residues 5–25 traverse the membrane as a helical segment; sequence AILIILGVIALIILVAHGIWS. The Cytoplasmic portion of the chain corresponds to 26-335; the sequence is NRCEKSQYFE…AERDYLARVS (310 aa).

The protein belongs to the ZipA family. In terms of assembly, interacts with FtsZ via their C-terminal domains.

The protein resides in the cell inner membrane. Essential cell division protein that stabilizes the FtsZ protofilaments by cross-linking them and that serves as a cytoplasmic membrane anchor for the Z ring. Also required for the recruitment to the septal ring of downstream cell division proteins. This is Cell division protein ZipA from Histophilus somni (strain 129Pt) (Haemophilus somnus).